Consider the following 466-residue polypeptide: MVSPAQPAAAMAAFARMAKGQVRNYSAPLDMAIPASKQKYIPSSGSYPKGFLVSGTHVGVKASNTKFPDLALISSETPCSAAAVFTTNKFQAAPVQVSKKTLESRQGQGIRSVVINSGCANAVTGKGGLEDAVNMGKKVDECNGLSEPSTIVMSTGVIGQRLPISKILNKIPTAHENLASTHDAWLTTARAICTTDTFPKLLSRTFALPSSPGRTYSLAGMTKGAGMIHPNMATLLGVLCTDAPIDPSALQSLLTHAVSRSFNSISVDGDTSTNDTVAILANGAAGGAPISSPASDDYTAMQEILTSFAQSLSQLVVRDGEGATKFVTVRVQNSPDYESARLIASTIARSPLVKTALYGRDANWGRILCAIGYTQGVAPGTVVPERTSVSFKPVDGSPVLKLLVNGEPEQVDEERASVILQEEDLEIVVDLGGGEKGEQGLGGEEAVYWFCDFSHEYVTINGDYRT.

Residues Thr-194, Lys-223, Thr-234, Glu-321, Asn-461, and Thr-466 each coordinate substrate. Thr-234 (nucleophile) is an active-site residue.

The protein belongs to the ArgJ family. In terms of assembly, heterodimer of an alpha and a beta chain. In terms of processing, the alpha and beta chains are autoproteolytically processed from a single precursor protein within the mitochondrion.

It localises to the mitochondrion matrix. It catalyses the reaction N(2)-acetyl-L-ornithine + L-glutamate = N-acetyl-L-glutamate + L-ornithine. It carries out the reaction L-glutamate + acetyl-CoA = N-acetyl-L-glutamate + CoA + H(+). The protein operates within amino-acid biosynthesis; L-arginine biosynthesis; L-ornithine and N-acetyl-L-glutamate from L-glutamate and N(2)-acetyl-L-ornithine (cyclic): step 1/1. Its pathway is amino-acid biosynthesis; L-arginine biosynthesis; N(2)-acetyl-L-ornithine from L-glutamate: step 1/4. Functionally, catalyzes two activities which are involved in the cyclic version of arginine biosynthesis: the synthesis of acetylglutamate from glutamate and acetyl-CoA, and of ornithine by transacetylation between acetylornithine and glutamate. This chain is Arginine biosynthesis bifunctional protein ArgJ, mitochondrial, found in Aspergillus fumigatus (strain ATCC MYA-4609 / CBS 101355 / FGSC A1100 / Af293) (Neosartorya fumigata).